The sequence spans 259 residues: Indole-3-glycerol phosphate synthase (259 aa).

Belongs to the TrpC family.

The catalysed reaction is 1-(2-carboxyphenylamino)-1-deoxy-D-ribulose 5-phosphate + H(+) = (1S,2R)-1-C-(indol-3-yl)glycerol 3-phosphate + CO2 + H2O. The protein operates within amino-acid biosynthesis; L-tryptophan biosynthesis; L-tryptophan from chorismate: step 4/5. This is Indole-3-glycerol phosphate synthase from Dehalococcoides mccartyi (strain ATCC BAA-2266 / KCTC 15142 / 195) (Dehalococcoides ethenogenes (strain 195)).